The primary structure comprises 215 residues: Large ribosomal subunit protein uL16m (215 aa).

Residues 1 to 36 constitute a mitochondrion transit peptide; that stretch reads MALQQYNKFPFFFSGILGPTRLNGLQMPPIQTMVRW.

The protein belongs to the universal ribosomal protein uL16 family. Component of the mitochondrial large ribosomal subunit (mt-LSU). Mature yeast 74S mitochondrial ribosomes consist of a small (37S) and a large (54S) subunit. The 37S small subunit contains a 15S ribosomal RNA (15S mt-rRNA) and at least 32 different proteins. The 54S large subunit contains a 21S rRNA (21S mt-rRNA) and at least 45 different proteins.

The protein localises to the mitochondrion. Its function is as follows. Component of the mitochondrial ribosome (mitoribosome), a dedicated translation machinery responsible for the synthesis of mitochondrial genome-encoded proteins, including at least some of the essential transmembrane subunits of the mitochondrial respiratory chain. The mitoribosomes are attached to the mitochondrial inner membrane and translation products are cotranslationally integrated into the membrane. In Schizosaccharomyces pombe (strain 972 / ATCC 24843) (Fission yeast), this protein is Large ribosomal subunit protein uL16m (mrpl16).